Here is a 980-residue protein sequence, read N- to C-terminus: Ras and Rab interactor 3 (980 aa).

The interval 1-40 is disordered; sequence MRRAEAPSSAHPAGPIPDAGKGEGEEDEEKDGTRLGLSTT. An SH2 domain is found at 63–158; it reads WLQLGLGQAE…LLPFTLRLPQ (96 aa). Residues 247–260 show a composition bias toward pro residues; that stretch reads PLPTGSYPPRPTPA. Disordered regions lie at residues 247–496 and 509–560; these read PLPT…TGAS and QHLQ…LEFS. The segment covering 261-271 has biased composition (low complexity); sequence TPDATSPTSKG. The span at 274-308 shows a compositional bias: pro residues; it reads RRPPPPPPLPTVPPTGPARPLAPPVPPAGPLPNSP. 2 stretches are compositionally biased toward polar residues: residues 406–422 and 484–494; these read ISRTASLNLPPQSTVSS and QEASSEKQATG. Residues 514–523 show a composition bias toward low complexity; the sequence is QSSSCPQSSP. Residues 584 to 729 form an interaction with RAB5B region; the sequence is FASVFHAFLS…TTTDLGVTTS (146 aa). The VPS9 domain occupies 700–843; that stretch reads HSRDGSLQQL…IKNYDKITVT (144 aa). Residues 865 to 962 enclose the Ras-associating domain; it reads KARASRSSVQ…FHFVYRPQDS (98 aa).

This sequence belongs to the RIN (Ras interaction/interference) family. Interacts with CD2AP, RAB5B, RAB31 and BIN1.

The protein localises to the cytoplasm. The protein resides in the cytoplasmic vesicle. It localises to the early endosome. Functionally, ras effector protein that functions as a guanine nucleotide exchange (GEF) for RAB5B and RAB31, by exchanging bound GDP for free GTP. Required for normal RAB31 function. The polypeptide is Ras and Rab interactor 3 (Rin3) (Mus musculus (Mouse)).